A 475-amino-acid polypeptide reads, in one-letter code: Pup--protein ligase (475 aa).

Glu-19 serves as a coordination point for Mg(2+). ATP is bound at residue Arg-64. Tyr-66 contacts Mg(2+). Catalysis depends on Asp-68, which acts as the Proton acceptor. Glu-74 lines the Mg(2+) pocket. ATP contacts are provided by Thr-77 and Trp-436.

The protein belongs to the Pup ligase/Pup deamidase family. Pup-conjugating enzyme subfamily.

The enzyme catalyses ATP + [prokaryotic ubiquitin-like protein]-L-glutamate + [protein]-L-lysine = ADP + phosphate + N(6)-([prokaryotic ubiquitin-like protein]-gamma-L-glutamyl)-[protein]-L-lysine.. It functions in the pathway protein degradation; proteasomal Pup-dependent pathway. It participates in protein modification; protein pupylation. Catalyzes the covalent attachment of the prokaryotic ubiquitin-like protein modifier Pup to the proteasomal substrate proteins, thereby targeting them for proteasomal degradation. This tagging system is termed pupylation. The ligation reaction involves the side-chain carboxylate of the C-terminal glutamate of Pup and the side-chain amino group of a substrate lysine. The protein is Pup--protein ligase of Corynebacterium aurimucosum (strain ATCC 700975 / DSM 44827 / CIP 107346 / CN-1) (Corynebacterium nigricans).